We begin with the raw amino-acid sequence, 153 residues long: Xanthine-guanine phosphoribosyltransferase (153 aa).

Residues 37–38, R69, and 88–96 each bind 5-phospho-alpha-D-ribose 1-diphosphate; these read RG and DDLVDTGGT. Residue R69 coordinates GMP. Residue D89 coordinates Mg(2+). Positions 92 and 135 each coordinate guanine. Xanthine contacts are provided by D92 and I135. GMP contacts are provided by residues 92–96 and 134–135; these read DTGGT and WI.

The protein belongs to the purine/pyrimidine phosphoribosyltransferase family. XGPT subfamily. Homotetramer. The cofactor is Mg(2+).

It localises to the cell membrane. It catalyses the reaction GMP + diphosphate = guanine + 5-phospho-alpha-D-ribose 1-diphosphate. The catalysed reaction is XMP + diphosphate = xanthine + 5-phospho-alpha-D-ribose 1-diphosphate. The enzyme catalyses IMP + diphosphate = hypoxanthine + 5-phospho-alpha-D-ribose 1-diphosphate. It participates in purine metabolism; GMP biosynthesis via salvage pathway; GMP from guanine: step 1/1. Its pathway is purine metabolism; XMP biosynthesis via salvage pathway; XMP from xanthine: step 1/1. In terms of biological role, purine salvage pathway enzyme that catalyzes the transfer of the ribosyl-5-phosphate group from 5-phospho-alpha-D-ribose 1-diphosphate (PRPP) to the N9 position of the 6-oxopurines guanine and xanthine to form the corresponding ribonucleotides GMP (guanosine 5'-monophosphate) and XMP (xanthosine 5'-monophosphate), with the release of PPi. To a lesser extent, also acts on hypoxanthine. The sequence is that of Xanthine-guanine phosphoribosyltransferase from Buchnera aphidicola subsp. Baizongia pistaciae (strain Bp).